A 238-amino-acid polypeptide reads, in one-letter code: Lipoprotein-releasing system ATP-binding protein LolD (238 aa).

The ABC transporter domain maps to 6 to 238; sequence LVCQGIRKVY…RSSLAQEMEA (233 aa). An ATP-binding site is contributed by 42–49; that stretch reads GSSGSGKS.

It belongs to the ABC transporter superfamily. Lipoprotein translocase (TC 3.A.1.125) family. In terms of assembly, the complex is composed of two ATP-binding proteins (LolD) and two transmembrane proteins (LolC and LolE).

The protein localises to the cell inner membrane. In terms of biological role, part of the ABC transporter complex LolCDE involved in the translocation of mature outer membrane-directed lipoproteins, from the inner membrane to the periplasmic chaperone, LolA. Responsible for the formation of the LolA-lipoprotein complex in an ATP-dependent manner. The sequence is that of Lipoprotein-releasing system ATP-binding protein LolD from Aliivibrio fischeri (strain ATCC 700601 / ES114) (Vibrio fischeri).